Consider the following 699-residue polypeptide: Triacylglycerol hydrolase DDHD2 (699 aa).

Polar residues predominate over residues 1-11 (MSSGESHQEQL). The tract at residues 1–25 (MSSGESHQEQLSQSDPSPSPNSCSS) is disordered. Positions 12-25 (SQSDPSPSPNSCSS) are enriched in low complexity. Positions 30-112 (DMDASSSYEP…WDELPSEVRR (83 aa)) constitute a WWE domain. The active-site Nucleophile is Ser351. One can recognise an SAM domain in the interval 383-445 (DRGDASTLEE…KILNHFSARK (63 aa)). Ser447 carries the post-translational modification Phosphoserine. Positions 484–688 (LNYKPEIFFA…VLLVLKEIYQ (205 aa)) constitute a DDHD domain. The interval 599 to 635 (QASETAEETEAEPESSSEKSNEANTEEPPVEVKEEAP) is disordered. A compositionally biased stretch (acidic residues) spans 603 to 613 (TAEETEAEPES).

This sequence belongs to the PA-PLA1 family. Forms homooligomers and, to a much smaller extent, heterooligomers with DDHD1.

Its subcellular location is the cytoplasm. It localises to the cytosol. The protein resides in the endoplasmic reticulum-Golgi intermediate compartment. The protein localises to the golgi apparatus. It is found in the cis-Golgi network. It carries out the reaction a triacylglycerol + H2O = a diacylglycerol + a fatty acid + H(+). The enzyme catalyses a diacylglycerol + H2O = a monoacylglycerol + a fatty acid + H(+). It catalyses the reaction a 1,3-diacylglycerol + H2O = a 1-acylglycerol + a fatty acid + H(+). The catalysed reaction is a 1-acylglycerol + H2O = glycerol + a fatty acid + H(+). It carries out the reaction 1,2,3-tri-(9Z-octadecenoyl)-glycerol + H2O = di-(9Z)-octadecenoylglycerol + (9Z)-octadecenoate + H(+). The enzyme catalyses di-(9Z)-octadecenoylglycerol + H2O = (9Z-octadecenoyl)-glycerol + (9Z)-octadecenoate + H(+). It catalyses the reaction 1,3-di-(9Z-octadecenoyl)-glycerol + H2O = 1-(9Z-octadecenoyl)-glycerol + (9Z)-octadecenoate + H(+). The catalysed reaction is trihexadecanoylglycerol + H2O = dihexadecanoylglycerol + hexadecanoate + H(+). It carries out the reaction 1,2-di-(9Z-octadecenoyl)-sn-glycero-3-phosphocholine + H2O = (9Z-octadecenoyl)-sn-glycero-3-phosphocholine + (9Z)-octadecenoate + H(+). The enzyme catalyses 1-(9Z-octadecenoyl)-glycerol + H2O = glycerol + (9Z)-octadecenoate + H(+). It catalyses the reaction 1,2-di-(9Z-octadecenoyl)-sn-glycero-3-phosphate + H2O = 2-(9Z-octadecenoyl)-sn-glycero-3-phosphate + (9Z)-octadecenoate + H(+). The catalysed reaction is 1-hexadecanoyl-2-(9Z-octadecenoyl)-sn-glycero-3-phosphate + H2O = 2-(9Z-octadecenoyl)-sn-glycero-3-phosphate + hexadecanoate + H(+). It carries out the reaction 1-hexadecanoyl-2-(9Z-octadecenoyl)-sn-glycero-3-phosphoethanolamine + H2O = 2-(9Z-octadecenoyl)-sn-glycero-3-phosphoethanolamine + hexadecanoate + H(+). The enzyme catalyses 1-hexadecanoyl-2-(9Z-octadecenoyl)-sn-glycero-3-phospho-L-serine + H2O = 2-(9Z-octadecenoyl)-sn-glycero-3-phospho-L-serine + hexadecanoate + H(+). It catalyses the reaction 1-hexadecanoyl-2-(9Z-octadecenoyl)-sn-glycero-3-phosphocholine + H2O = 2-(9Z-octadecenoyl)-sn-glycero-3-phosphocholine + hexadecanoate + H(+). Its function is as follows. Diacylglycerol (DAG) and triacylglycerol (TAG) lipase that is required for proper lipid homeostasis in the central nervous system. It cooperates with PNPLA2/ATGL in neuronal TAG catabolism and hydrolyzes sn-1,3-DAG downstream of PNPLA2/ATGL. In vitro, also acts as a phospholipase that hydrolyzes preferentially phosphatidic acids, including 1,2-dioleoyl-sn-phosphatidic acid, phosphatidylcholine and phosphatidylethanolamine. Specifically binds to phosphatidylinositol 3-phosphate (PI(3)P), phosphatidylinositol 4-phosphate (PI(4)P), phosphatidylinositol 5-phosphate (PI(5)P) and possibly phosphatidylinositol 4,5-bisphosphate (PI(4,5)P2). May be involved in the maintenance of the endoplasmic reticulum and/or Golgi structures. May regulate the transport between Golgi apparatus and plasma membrane. This Mus musculus (Mouse) protein is Triacylglycerol hydrolase DDHD2.